Here is a 685-residue protein sequence, read N- to C-terminus: Mannan-binding lectin serine protease 2 (685 aa).

The first 19 residues, 1–19 (MRLLIFLGLLWSLVATLLG), serve as a signal peptide directing secretion. Residues 20–137 (SKWPEPVFGR…TGFEAFYAAE (118 aa)) form the CUB 1 domain. Residues Glu-67 and Asp-75 each coordinate Ca(2+). The cysteines at positions 72 and 90 are disulfide-linked. A glycan (N-linked (GlcNAc...) asparagine) is linked at Asn-103. Ca(2+)-binding residues include Asp-120, Ser-122, Asn-123, Asp-138, and Glu-141. In terms of domain architecture, EGF-like; calcium-binding spans 138 to 181 (DVDECRVSLGDSVPCDHYCHNYLGGYYCSCRAGYVLHQNKHTCS). 5 cysteine pairs are disulfide-bonded: Cys-142-Cys-156, Cys-152-Cys-165, Cys-167-Cys-180, Cys-184-Cys-211, and Cys-241-Cys-259. Asn-158 and Gly-162 together coordinate Ca(2+). Asn-158 carries the (3R)-3-hydroxyasparagine modification. The CUB 2 domain occupies 184 to 296 (CSGQVFTGRS…TGWKIHYTST (113 aa)). 2 N-linked (GlcNAc...) asparagine glycosylation sites follow: Asn-285 and Asn-308. Sushi domains follow at residues 298–363 (RPCP…ECSI) and 364–431 (IDCG…VCEP). Disulfide bonds link Cys-300–Cys-348, Cys-328–Cys-361, Cys-366–Cys-411, Cys-396–Cys-429, Cys-433–Cys-552, Cys-598–Cys-617, and Cys-628–Cys-659. The 240-residue stretch at 444-683 (IVGGQPAKPG…YIPWIENIIS (240 aa)) folds into the Peptidase S1 domain. Residues His-483 and Asp-532 each act as charge relay system in the active site. Asn-545 carries an N-linked (GlcNAc...) asparagine glycan. Ser-632 acts as the Charge relay system in catalysis. Asn-641 carries N-linked (GlcNAc...) asparagine glycosylation.

This sequence belongs to the peptidase S1 family. In terms of assembly, homodimer; disulfide-linked. Binds MBL2. Isoform 2 binds to MASP1. Binds SERPING1. Post-translationally, the iron and 2-oxoglutarate dependent 3-hydroxylation of aspartate and asparagine is (R) stereospecific within EGF domains. As to expression, plasma.

The protein localises to the secreted. The catalysed reaction is Selective cleavage after Arg-223 in complement component C2 (-Ser-Leu-Gly-Arg-|-Lys-Ile-Gln-Ile) and after Arg-76 in complement component C4 (-Gly-Leu-Gln-Arg-|-Ala-Leu-Glu-Ile).. Its function is as follows. Serum protease that plays an important role in the activation of the complement system via mannose-binding lectin. After activation by auto-catalytic cleavage it cleaves C2 and C4, leading to their activation and to the formation of C3 convertase. This Mus musculus (Mouse) protein is Mannan-binding lectin serine protease 2 (Masp2).